A 75-amino-acid chain; its full sequence is Notewaprin-b (75 aa).

An N-terminal signal peptide occupies residues Met-1–Ser-24. The WAP domain occupies Arg-27–Ile-72. 4 disulfide bridges follow: Cys-34–Cys-60, Cys-43–Cys-64, Cys-47–Cys-59, and Cys-53–Cys-68.

This sequence belongs to the venom waprin family. In terms of tissue distribution, expressed by the venom gland.

It is found in the secreted. Functionally, damages membranes of susceptible bacteria. Has no hemolytic activity. Not toxic to mice. Does not inhibit the proteinases elastase and cathepsin G. The protein is Notewaprin-b of Notechis scutatus scutatus (Mainland tiger snake).